Reading from the N-terminus, the 520-residue chain is Ribonuclease Y (520 aa).

The Extracellular portion of the chain corresponds to 1–3 (MTP). The chain crosses the membrane as a helical span at residues 4 to 24 (IMMVLISILLILLGLVVGYFV). The Cytoplasmic portion of the chain corresponds to 25–520 (RKTIAEAKIA…RETRAVEYAK (496 aa)). A coiled-coil region spans residues 29–141 (AEAKIAGARG…KVDEMIRMQQ (113 aa)). Residues 210–273 (TVSVVNLPND…ETARIALDKL (64 aa)) form the KH domain. The HD domain occupies 336-429 (VLKHSMEVAF…VAAADALSAA (94 aa)).

Belongs to the RNase Y family. As to quaternary structure, homodimer. Component of a possible RNA degradosome complex composed of rny, rnjA, rnjB, pnp, pfkA and eno (although rnjA and rnjB's presence is unclear). Interacts with RNA helicase CshA which may also be a member of the RNA degradosome complex. Interacts with full-length dynamin-like protein DynA. The cofactor is Mg(2+). Mn(2+) serves as cofactor. Zn(2+) is required as a cofactor.

The protein localises to the cell membrane. With respect to regulation, shows preference for transcripts carrying a monophosphate group at the 5' end. Functionally, endoribonuclease that initiates mRNA decay. Initiates the decay of all SAM-dependent riboswitches, such as yitJ riboswitch. Involved in processing of the gapA operon mRNA, it cleaves between cggR and gapA. Is also the decay-initiating endonuclease for rpsO mRNA. Involved in degradation of type I toxin-antitoxin system bsrG/SR4 RNAs and a minor role in degradation of type I toxin-antitoxin system bsrE/SR5 degradation. This is Ribonuclease Y (rny) from Bacillus subtilis (strain 168).